The sequence spans 293 residues: Dioxygenase cdmA (293 aa).

His135, Asp137, and His212 together coordinate Fe cation.

Belongs to the PhyH family. Homodimer. Fe cation is required as a cofactor.

The enzyme catalyses chrodrimanin C + 2-oxoglutarate + O2 = verruculide A + succinate + CO2 + H2O. It carries out the reaction chrodrimanin H + 2-oxoglutarate + O2 = chrodrimanin E + succinate + CO2 + H2O. The protein operates within secondary metabolite biosynthesis; terpenoid biosynthesis. Dioxygenase; part of the gene cluster that mediates the biosynthesis of chrodrimanin B, a meroterpenoid that acts as a potent blocker of insect GABA-gated chloride channels. The first step of the pathway is the biosynthesis of 6-hydroxymellein by the polyketide synthase cdmE. The prenyltransferase cdmH acts as a 6-hydroxymellein 5-farnesyltransferase and produces the hydrophobic metabolite verruculide C. The FAD-dependent monooxygenase cdmI further converts verruculide C into verruculide B. The terpene cyclase cdmG then produced the pentacyclic molecule 3-hydroxypentacecilide A, the backbone structure of chrodrimanin B, via folding the farnesyl moiety of the substrate into the chair-boat conformation. The short-chain dehydrogenase/reductase cdmF functions as the 3-OH dehydrogenase that oxidizes the C-3 hydroxyl group of 3-hydroxypentacecilide A and produces chrodrimanin C, the dehydrogenated product of 3-hydroxypentacecilide A. The cytochrome P450 monooxygenase cdmJ then accepts both 3-hydroxypentacecilide A and chrodrimanin C and functions as a C-7-beta-hydroxylase to produce respectively chrodrimanin H and chrodrimanin F. The dioxygenase cdmA accepts chrodrimanin H to afford chrodrimanin E, which is further transformed to chrodrimanin A by the dioxygenase cdmD. CdmA can also accept chrodrimanin C as substrate to convert it into verruculide A, which is further converted into chrodrimanin T by cdmD. The last step of the biosynthesis is proposed to be performed by the acetyltransferase cdmC which acetylates chrodrimanin A to yield chrodrimanin B. The pathway may also lead to the production of additional shunt products, including chrodrimanins T and U. This chain is Dioxygenase cdmA, found in Talaromyces verruculosus (Penicillium verruculosum).